A 273-amino-acid chain; its full sequence is Exosome complex component Rrp42 (273 aa).

This sequence belongs to the RNase PH family. Rrp42 subfamily. As to quaternary structure, component of the archaeal exosome complex. Forms a hexameric ring-like arrangement composed of 3 Rrp41-Rrp42 heterodimers. The hexameric ring associates with a trimer of Rrp4 and/or Csl4 subunits.

The protein resides in the cytoplasm. Its function is as follows. Non-catalytic component of the exosome, which is a complex involved in RNA degradation. Contributes to the structuring of the Rrp41 active site. In Thermococcus gammatolerans (strain DSM 15229 / JCM 11827 / EJ3), this protein is Exosome complex component Rrp42.